Here is a 440-residue protein sequence, read N- to C-terminus: Methylenetetrahydrofolate--tRNA-(uracil-5-)-methyltransferase TrmFO (440 aa).

14–19 (GAGLAG) contacts FAD.

This sequence belongs to the MnmG family. TrmFO subfamily. FAD serves as cofactor.

Its subcellular location is the cytoplasm. The enzyme catalyses uridine(54) in tRNA + (6R)-5,10-methylene-5,6,7,8-tetrahydrofolate + NADH + H(+) = 5-methyluridine(54) in tRNA + (6S)-5,6,7,8-tetrahydrofolate + NAD(+). It carries out the reaction uridine(54) in tRNA + (6R)-5,10-methylene-5,6,7,8-tetrahydrofolate + NADPH + H(+) = 5-methyluridine(54) in tRNA + (6S)-5,6,7,8-tetrahydrofolate + NADP(+). Functionally, catalyzes the folate-dependent formation of 5-methyl-uridine at position 54 (M-5-U54) in all tRNAs. This Bdellovibrio bacteriovorus (strain ATCC 15356 / DSM 50701 / NCIMB 9529 / HD100) protein is Methylenetetrahydrofolate--tRNA-(uracil-5-)-methyltransferase TrmFO.